A 341-amino-acid chain; its full sequence is Glycerol-3-phosphate dehydrogenase [NAD(P)+] (341 aa).

Residues Ser14, Phe15, Arg35, and Lys108 each coordinate NADPH. Residues Lys108 and Gly136 each coordinate sn-glycerol 3-phosphate. Ser140 is an NADPH binding site. Positions 191, 244, 254, 255, and 256 each coordinate sn-glycerol 3-phosphate. Lys191 serves as the catalytic Proton acceptor. NADPH is bound at residue Arg255. 2 residues coordinate NADPH: Val279 and Glu281.

The protein belongs to the NAD-dependent glycerol-3-phosphate dehydrogenase family.

Its subcellular location is the cytoplasm. It carries out the reaction sn-glycerol 3-phosphate + NAD(+) = dihydroxyacetone phosphate + NADH + H(+). It catalyses the reaction sn-glycerol 3-phosphate + NADP(+) = dihydroxyacetone phosphate + NADPH + H(+). The protein operates within membrane lipid metabolism; glycerophospholipid metabolism. In terms of biological role, catalyzes the reduction of the glycolytic intermediate dihydroxyacetone phosphate (DHAP) to sn-glycerol 3-phosphate (G3P), the key precursor for phospholipid synthesis. This Pseudomonas putida (strain GB-1) protein is Glycerol-3-phosphate dehydrogenase [NAD(P)+].